The following is a 437-amino-acid chain: Doublesex- and mab-3-related transcription factor A2 (437 aa).

Positions 49 to 96 (CARCRNHGVVSALKGHKRYCRWKDCMCAKCTLIAERQRVMAAQVALRR) form a DNA-binding region, DM. Residues 160–253 (IPRSMTPQLP…DPSSSSLARQ (94 aa)) form a disordered region. Low complexity-rich tracts occupy residues 179 to 201 (SEPV…SGSE) and 223 to 235 (SPSL…SESG). The region spanning 254–289 (RTPINILTRVFPAQKRSVLELVLQGCGGDVVQAIEQ) is the DMA domain.

The protein belongs to the DMRT family.

It localises to the nucleus. Functionally, may be involved in sexual development. The protein is Doublesex- and mab-3-related transcription factor A2 (dmrta2) of Xenopus laevis (African clawed frog).